A 552-amino-acid chain; its full sequence is MSEIALTVSMLALVAVLGLWMGNWKIYGVGLGIGGVLFGGIIVGHFAQSWQLNLNGDMLHFIQEFGLILFVYTIGIQVGPGFFSSLRVSGLRLNGFAILLVLVGGLVAAVVHKLFAVPLPIILGVFSGAVTNTPALGAGQQILTDLGSDPALVDRMGMGYAMAYPFGICGILLVMWLIRLFFRINIEQEAQAFASSLGNQRELLHTMNVAVRNPNLQGMAIKNVPLLNGEDIICSRLKRGDLLMVPAPLEKLELGDYLHLVGKRESLENARLVIGEEVDVSLSTRGTELQVVRAVVTNEKVLGSKIRDLNLKQKYDVVISRLNRSGVELVAGSNVTLQFGDILNLVGRPESIEAVAAIVGNAQQKLQQVQMLPVFIGIGLGVLLGSIPLFIPGFPAALRLGLAGGPLVAALILGRIGSIGKLYWFMPPSANLALRELGIVLFLAVVGLKSGGNFVDTLINGEGLAWIGYGALITAIPLFSVGVLARMVGKMNYLTLSGMLAGSMTDPPALAFANGLHPTSGAAALSYATVYPLAMFLRIMSPQLLAVLFWAM.

6 helical membrane passes run 4–24 (IALT…MGNW), 26–46 (IYGV…VGHF), 65–85 (FGLI…FFSS), 96–116 (FAIL…KLFA), 117–137 (VPLP…PALG), and 158–178 (MGYA…MWLI). RCK C-terminal domains follow at residues 192–276 (AFAS…VIGE) and 279–361 (DVSL…IVGN). The next 6 membrane-spanning stretches (helical) occupy residues 371-391 (MLPV…PLFI), 393-413 (GFPA…ALIL), 439-459 (IVLF…DTLI), 464-484 (LAWI…VGVL), 493-513 (YLTL…LAFA), and 530-550 (VYPL…VLFW).

The protein belongs to the AAE transporter (TC 2.A.81) family. YidE subfamily.

It localises to the cell membrane. This Serratia proteamaculans (strain 568) protein is Putative transport protein Spro_0050.